The primary structure comprises 308 residues: uncharacterized protein (308 aa).

Helical transmembrane passes span 6 to 26 (VVLIVLILVLVGYFSKIFGIL), 31 to 51 (AKILNNIVIYIAMPSTIFLTI), 63 to 83 (FLKLPVVIFLCCLFVGILAYL), 100 to 120 (ILVSMLGNTGFLGYPVALGMF), 128 to 148 (AIFCDLGGVFATMLLGTYVGI), 162 to 182 (MAKFPPLITGILSIILVFFGF), 195 to 215 (LNYLSSATVPLIMMSLGLSLS), 221 to 241 (FGVFWGIIASIFRFIVSPATA), 257 to 277 (VLLVESSMPSAMMTLVLGTLY), and 287 to 307 (SIFITTTFSLLVIALWGWILL).

It belongs to the auxin efflux carrier (TC 2.A.69) family.

It is found in the cell membrane. This is an uncharacterized protein from Methanocaldococcus jannaschii (strain ATCC 43067 / DSM 2661 / JAL-1 / JCM 10045 / NBRC 100440) (Methanococcus jannaschii).